Reading from the N-terminus, the 218-residue chain is Probable cutinase 3 (218 aa).

The first 17 residues, 1-17 (MSLRSVLVAALAALAVA), serve as a signal peptide directing secretion. 2 cysteine pairs are disulfide-bonded: Cys-41–Cys-120 and Cys-67–Cys-81. Residue Ser-131 is the Nucleophile of the active site. A disulfide bridge links Cys-182 with Cys-189. Asp-186 is an active-site residue. The active-site Proton donor/acceptor is His-199.

Belongs to the cutinase family.

It is found in the secreted. The catalysed reaction is cutin + H2O = cutin monomers.. In terms of biological role, catalyzes the hydrolysis of complex carboxylic polyesters found in the cell wall of plants. Degrades cutin, a macromolecule that forms the structure of the plant cuticle. The chain is Probable cutinase 3 from Aspergillus terreus (strain NIH 2624 / FGSC A1156).